Here is a 53-residue protein sequence, read N- to C-terminus: 20 kDa chaperonin (53 aa).

Cpn-10 domain stretches follow at residues 1–10 and 11–53; these read YTSIKPLGDR and VAEA…KITP.

This sequence belongs to the GroES chaperonin family. Forms stable complexes with cpn60 in the presence of ATP. Homotetramer.

Its subcellular location is the plastid. The protein resides in the chloroplast. Functionally, seems to function only as a co-chaperone, along with cpn60, and in certain cases is essential for the discharge of biologically active proteins from cpn60. The sequence is that of 20 kDa chaperonin from Populus euphratica (Euphrates poplar).